A 282-amino-acid chain; its full sequence is Ribonuclease P protein subunit p38 (282 aa).

Disordered regions lie at residues 1-21 (MAAA…PLPV) and 61-103 (EDRK…QASG). Alanine 2 is subject to N-acetylalanine. Position 12 is a phosphoserine (serine 12). Residues 88-97 (EDLKKEKPKG) show a composition bias toward basic and acidic residues. Serine 226 and serine 235 each carry phosphoserine. The interval 262 to 282 (KLIPNPNKIRKPPKSKRTASK) is disordered. Residues 269–282 (KIRKPPKSKRTASK) show a composition bias toward basic residues.

This sequence belongs to the eukaryotic ribosomal protein eL8 family. Component of nuclear RNase P and RNase MRP ribonucleoproteins. RNase P consists of a catalytic RNA moiety and about 10 protein subunits; POP1, POP4, POP5, POP7, RPP14, RPP21, RPP25, RPP30, RPP38 and RPP40. Within the RNase P complex, POP1, POP7 and RPP25 form the 'finger' subcomplex, POP5, RPP14, RPP40 and homodimeric RPP30 form the 'palm' subcomplex, and RPP21, POP4 and RPP38 form the 'wrist' subcomplex. All subunits of the RNase P complex interact with the catalytic RNA. Several subunits of RNase P are also part of the RNase MRP complex. RNase MRP consists of a catalytic RNA moiety and about 8 protein subunits; POP1, POP7, RPP25, RPP30, RPP38, RPP40 and possibly also POP4 and POP5.

The protein resides in the nucleus. It is found in the nucleolus. In terms of biological role, component of ribonuclease P, a ribonucleoprotein complex that generates mature tRNA molecules by cleaving their 5'-ends. Also a component of the MRP ribonuclease complex, which cleaves pre-rRNA sequences. The polypeptide is Ribonuclease P protein subunit p38 (RPP38) (Bos taurus (Bovine)).